We begin with the raw amino-acid sequence, 550 residues long: MTTMTTMTTEQLGMNNSVNDKLDVLLIGAGFTGLYQLYHLRKLGYKVHLVDAGADIGGIWHWNCYPGARVDTHCQIYQYSIPELWQEFNWKELFPNWAQMREYFHFADKKLDLSKDISFNTRVQSAVFDEGTREWTVRSIGHQPIQARFVIANLGFGASPSTPNVDGIETFKGQWYHTALWPQEGVNMAGKRVAIIGTGSSGVQVAQEAALDAKQVTVYQRTPNLALPMHQKQLSAEDNLRMKPELPAAFERRGKCFAGFDFDFIAKNATELSAAERTEILEELWNAGGFRYWLANFQDYLFDDKANDYVYEFWRDKVRARIKDPKVAEKLAPMKKPHPYGAKRPSLEQWYYEIFNQNNVTLVDVNETPVLRITEKGIVTAEGEAEFDLIVFATGFDAVTGGLTSIDFRNNQGQSFKDVWSDGIRTQLGVATAGFPNLLFGYGPQSPAGFCNGPSSAEYQGDLLIQLMNYLRDNNISRIEAQSEAQEEWSKLIADFWDSSLFPRAKSWYQGSNIPGKKVESLNFPLGLPTYISKFNESAEKGYAGFSLAS.

Residues 31–32 (FT), aspartate 51, tryptophan 60, aspartate 71, tyrosine 77, and valine 123 contribute to the FAD site.

Belongs to the FAD-binding monooxygenase family. Homotetramer. Requires FAD as cofactor.

It carries out the reaction cyclopentanone + NADPH + O2 + H(+) = 5-valerolactone + NADP(+) + H2O. It participates in alcohol metabolism; cyclopentanol degradation; 5-valerolactone from cyclopentanol: step 2/2. Catalyzes a Baeyer-Villiger oxidation reaction, i.e. the insertion of an oxygen atom into a carbon-carbon bond adjacent to a carbonyl, which converts ketones to esters or lactones using NADPH as an electron donor. Converts cyclopentanone to 5-valerolactone, a step in the degradation pathway of cyclopentanol. Besides cycloalkanones, can also act on methylated and other alkylated cycloalkanones, and on methylated cycloalkenones, with high enantioselectivity in some cases. Cannot use NADH instead of NADPH. This chain is Cyclopentanone 1,2-monooxygenase (cpnB), found in Comamonas sp. (strain NCIMB 9872).